A 1594-amino-acid polypeptide reads, in one-letter code: Mucin-like protein (1594 aa).

Over 1 to 1530 (DTTAGPDTTS…YETREDGLEM (1530 aa)) the chain is Extracellular. TSP type-1 domains follow at residues 141–196 (DGGF…GSCP), 198–253 (DGNF…PPCP), and 255–310 (DGNF…GPCP). 9 cysteine pairs are disulfide-bonded: Cys153-Cys190, Cys157-Cys195, Cys168-Cys180, Cys210-Cys247, Cys214-Cys252, Cys225-Cys237, Cys267-Cys304, Cys271-Cys309, and Cys282-Cys294. Residues 400–566 (LTISDDAFEQ…GVWFFRLEMN (167 aa)) enclose the NIDO domain. Residues 568-706 (ILSLAGKKCN…RSCFGYTLRR (139 aa)) form the AMOP domain. Positions 706–901 (RRGLIFGDPH…KWQINASQSL (196 aa)) constitute a VWFD domain. 2 EGF-like domains span residues 1063–1108 (LILL…QYCQ) and 1110–1156 (KIDA…SICE). Disulfide bonds link Cys1067–Cys1075, Cys1069–Cys1096, Cys1098–Cys1107, Cys1114–Cys1127, Cys1121–Cys1141, Cys1144–Cys1155, Cys1161–Cys1173, Cys1169–Cys1182, Cys1285–Cys1296, Cys1292–Cys1305, Cys1307–Cys1320, Cys1326–Cys1341, Cys1334–Cys1350, and Cys1352–Cys1363. The EGF-like 3; calcium-binding domain maps to 1157–1191 (DIDECSDANVSKCDHSCINLPGSYVCDCNQGFSLE). The EGF-like 4; calcium-binding domain occupies 1281 to 1321 (DINECTTHRHKCSQICHNLDGSYTCSCQPGFNLSPDQTTCE). Residues 1322 to 1364 (DIDECGLINEAHCEGSLEICINTMGSFRCECQDGFHRVNDTCQ) form the EGF-like 5; calcium-binding domain. Residues 1531-1551 (IWLLVGVSVAVAVPLMIVIVI) form a helical membrane-spanning segment. Residues 1552–1593 (LYREYRRIAKQRRKTNNFDLRQWSGARERTIYSGFTNSKSAR) lie on the Cytoplasmic side of the membrane.

As to expression, component of the acid-insoluble and acid-soluble organic matrix of the aragonitic skeleton (at protein level).

Its subcellular location is the membrane. This Acropora millepora (Staghorn coral) protein is Mucin-like protein.